Consider the following 391-residue polypeptide: Polyketide synthase 3 (391 aa).

The active site involves Cys-164.

The protein belongs to the thiolase-like superfamily. Chalcone/stilbene synthases family. In terms of assembly, homodimer.

It carries out the reaction (E)-4-coumaroyl-CoA + 3 malonyl-CoA + 3 H(+) = 2',4,4',6'-tetrahydroxychalcone + 3 CO2 + 4 CoA. Its pathway is secondary metabolite biosynthesis; flavonoid biosynthesis. Polyketide synthase producing p-coumaryltriacetic acid lactone (CTAL) and slightly naringenin chalcone. Can use p-coumaryl-CoA as substrate. The protein is Polyketide synthase 3 (PKS3) of Rubus idaeus (Raspberry).